The sequence spans 265 residues: RNA-binding protein 7 (265 aa).

G2 is subject to N-acetylglycine. The 78-residue stretch at 10–87 folds into the RRM domain; it reads RTLFVGNLET…RPIKIQFRSG (78 aa). ZCCHC8 binding stretches follow at residues 25–35 and 59–76; these read LLFELFHQAGP and HEVS…IKLF. The interval 91 to 125 is disordered; the sequence is ASQDASVSYPQHHVGNLSPTSTSPNSYERTVGNVS. Over residues 107 to 125 the composition is skewed to polar residues; it reads LSPTSTSPNSYERTVGNVS. S136 is modified (phosphoserine; by MAPKAPK2). At S137 the chain carries Phosphoserine. Omega-N-methylarginine is present on R152. Disordered stretches follow at residues 166-224 and 237-265; these read DQLG…HGSD and DDRN…SSRH. The segment covering 170–196 has biased composition (polar residues); sequence FSPSAQPHGHTFNQSSSSQWRQDALSS. At S203 the chain carries Phosphoserine. 2 stretches are compositionally biased toward basic and acidic residues: residues 207–224 and 237–256; these read LADR…HGSD and DDRN…DSSR.

Component of the nuclear exosome targeting (NEXT) complex composed of MTREX, ZCCHC8, and RBM7 that directs a subset of non-coding short-lived RNAs for exosomal degradation. Interacts with ZCCHC8 and SF3B2/SAP145. Binds to MTREX through ZCCHC8. Interacts with YWHAE and YWHAZ; these interactions are stress-dependent and RBM7 phosphorylation dependent; release RNA from the NEXT complex and may affect RNA targeting to the nuclear RNA exosomome for degradation. Interacts with MEPCE and LARP7, the core subunits of 7SK snRNP; upon genotoxic stress this interaction is enhanced, triggering the release of inactive P-TEFb complex from the core and P-TEFb complex activation. Post-translationally, phosphorylated at Ser-136 by MAPK14/p38-alpha-activated MAPKAPK2/MK2; this phosphorylation is stress-dependent; this phosphorylation decreases its RNA-binding capacity therefore affecting RNA nuclear exosome-mediated degradation. This phosphorylation mediates YWHAE and YWHAZ interactions.

It localises to the nucleus. The protein resides in the nucleoplasm. Its function is as follows. RNA-binding subunit of the trimeric nuclear exosome targeting (NEXT) complex, a complex that functions as an RNA exosome cofactor that directs a subset of non-coding short-lived RNAs for exosomal degradation. NEXT is involved in surveillance and turnover of aberrant transcripts and non-coding RNAs. Binds preferentially polyuridine sequences and associates with newly synthesized RNAs, including pre-mRNAs and short-lived exosome substrates such as promoter upstream transcripts (PROMPTs), enhancer RNAs (eRNAs), and 3'-extended products from small nuclear RNAs (snRNAs). Participates in several biological processes including DNA damage response (DDR) and stress response. During stress response, activation of the p38MAPK-MK2 pathway decreases RBM7-RNA-binding and subsequently the RNA exosome degradation activities, thereby modulating the turnover of non-coding transcriptome. Participates in DNA damage response (DDR), through its interaction with MEPCE and LARP7, the core subunits of 7SK snRNP complex, that release the positive transcription elongation factor b (P-TEFb) complex from the 7SK snRNP. In turn, activation of P-TEFb complex induces the transcription of P-TEFb-dependent DDR genes to promote cell viability. The chain is RNA-binding protein 7 from Mus musculus (Mouse).